The primary structure comprises 690 residues: Iron-sulfur clusters transporter ATM1, mitochondrial (690 aa).

The transit peptide at 1–26 (MLLLPRCPVIGRIVRSKFRSGLIRNH) directs the protein to the mitochondrion. The Mitochondrial matrix segment spans residues 27 to 110 (SPVIFTVSKL…PKGNNKVRIR (84 aa)). Residues 111 to 132 (VLIALGLLISAKILNVQVPFFF) form a helical membrane-spanning segment. An ABC transmembrane type-1 domain is found at 111–401 (VLIALGLLIS…LGSVYRDLKQ (291 aa)). The Mitochondrial intermembrane portion of the chain corresponds to 133–155 (KQTIDSMNIAWDDPTVALPAAIG). A helical transmembrane segment spans residues 156–179 (LTILCYGVARFGSVLFGELRNAVF). Residues 180–228 (AKVAQNAIRTVSLQTFQHLMKLDLGWHLSRQTGGLTRAMDRGTKGISQV) lie on the Mitochondrial matrix side of the membrane. A helical membrane pass occupies residues 229–252 (LTAMVFHIIPISFEISVVCGILTY). Q253 is a topological domain (mitochondrial intermembrane). The chain crosses the membrane as a helical span at residues 254–274 (FGASFAAITFSTMLLYSIFTI). Residues 275–340 (KTTAWRTHFR…SQIKVSQSLA (66 aa)) lie on the Mitochondrial matrix side of the membrane. Glutathione-binding positions include 280–284 (RTHFR) and 343–346 (NSGQ). Residues 341 to 359 (FLNSGQNLIFTTALTAMMY) traverse the membrane as a helical segment. Over 360–374 (MGCTGVIGGNLTVGD) the chain is Mitochondrial intermembrane. Residues 375-396 (LVLINQLVFQLSVPLNFLGSVY) traverse the membrane as a helical segment. G393 lines the glutathione pocket. The Mitochondrial matrix portion of the chain corresponds to 397 to 690 (RDLKQSLIDM…ENELKDQQEL (294 aa)). An ABC transporter domain is found at 436–672 (ITFENVTFGY…PGSLYRELWT (237 aa)). ATP-binding positions include Y445 and 469-480 (GSSGSGKSTILK).

The protein belongs to the ABC transporter superfamily. ABCB family. Heavy Metal importer (TC 3.A.1.210) subfamily. Homodimer.

Its subcellular location is the mitochondrion inner membrane. Its function is as follows. Performs an essential function in the generation of cytoplasmic iron-sulfur proteins by mediating the ATP-dependent export of Fe/S cluster precursors synthesized by NFS1 and other mitochondrial proteins. Hydrolyzes ATP. Binds glutathione and may function by transporting a glutathione-conjugated iron-sulfur compound. In Saccharomyces cerevisiae (strain ATCC 204508 / S288c) (Baker's yeast), this protein is Iron-sulfur clusters transporter ATM1, mitochondrial.